The following is a 97-amino-acid chain: DTDSDLVLDVDGNPLEVGSEYYIGRAVGFYVVERFSSDVQIDSGLCRSDGFWRVSLDAYSPPTTTSSQQQRYLTVFRDRLSGLKLVGLTDDSDRVVL.

It belongs to the protease inhibitor I3 (leguminous Kunitz-type inhibitor) family.

In terms of biological role, exhibits Kunitz trypsin protease inhibitor activity. The polypeptide is Kunitz-type trypsin inhibitor 1 (Selenicereus costaricensis (Red-fleshed dragon fruit)).